A 347-amino-acid chain; its full sequence is GMP reductase (347 aa).

108–131 (DDFTKTRQILAMSSALRFICVDVA) is a binding site for NADP(+). Residues G181 and G183 each coordinate K(+). Catalysis depends on C186, which acts as the Thioimidate intermediate. Position 216–239 (216–239 (IVGDGGCTCPGDVAKAFGGGADFV)) interacts with NADP(+).

Belongs to the IMPDH/GMPR family. GuaC type 1 subfamily. Homotetramer.

It carries out the reaction IMP + NH4(+) + NADP(+) = GMP + NADPH + 2 H(+). In terms of biological role, catalyzes the irreversible NADPH-dependent deamination of GMP to IMP. It functions in the conversion of nucleobase, nucleoside and nucleotide derivatives of G to A nucleotides, and in maintaining the intracellular balance of A and G nucleotides. In Aeromonas hydrophila subsp. hydrophila (strain ATCC 7966 / DSM 30187 / BCRC 13018 / CCUG 14551 / JCM 1027 / KCTC 2358 / NCIMB 9240 / NCTC 8049), this protein is GMP reductase.